The primary structure comprises 189 residues: Ribosome hibernation promotion factor (189 aa).

This sequence belongs to the HPF/YfiA ribosome-associated protein family. Long HPF subfamily. Interacts with 100S ribosomes.

It localises to the cytoplasm. In terms of biological role, required for dimerization of active 70S ribosomes into 100S ribosomes in stationary phase; 100S ribosomes are translationally inactive and sometimes present during exponential growth. This chain is Ribosome hibernation promotion factor, found in Staphylococcus epidermidis (strain ATCC 35984 / DSM 28319 / BCRC 17069 / CCUG 31568 / BM 3577 / RP62A).